We begin with the raw amino-acid sequence, 349 residues long: Phosphoribosylformylglycinamidine cyclo-ligase (349 aa).

It belongs to the AIR synthase family.

The protein resides in the cytoplasm. The catalysed reaction is 2-formamido-N(1)-(5-O-phospho-beta-D-ribosyl)acetamidine + ATP = 5-amino-1-(5-phospho-beta-D-ribosyl)imidazole + ADP + phosphate + H(+). Its pathway is purine metabolism; IMP biosynthesis via de novo pathway; 5-amino-1-(5-phospho-D-ribosyl)imidazole from N(2)-formyl-N(1)-(5-phospho-D-ribosyl)glycinamide: step 2/2. The protein is Phosphoribosylformylglycinamidine cyclo-ligase of Listeria monocytogenes serotype 4b (strain CLIP80459).